A 430-amino-acid chain; its full sequence is UDP-N-acetylglucosamine 1-carboxyvinyltransferase (430 aa).

Position 22 to 23 (22 to 23 (KN)) interacts with phosphoenolpyruvate. Arg-102 provides a ligand contact to UDP-N-acetyl-alpha-D-glucosamine. Catalysis depends on Cys-126, which acts as the Proton donor. The residue at position 126 (Cys-126) is a 2-(S-cysteinyl)pyruvic acid O-phosphothioketal. UDP-N-acetyl-alpha-D-glucosamine is bound by residues 131–135 (RPVDL), 172–175 (KVSV), Asp-317, and Ile-339.

Belongs to the EPSP synthase family. MurA subfamily.

The protein resides in the cytoplasm. The catalysed reaction is phosphoenolpyruvate + UDP-N-acetyl-alpha-D-glucosamine = UDP-N-acetyl-3-O-(1-carboxyvinyl)-alpha-D-glucosamine + phosphate. It participates in cell wall biogenesis; peptidoglycan biosynthesis. Cell wall formation. Adds enolpyruvyl to UDP-N-acetylglucosamine. This is UDP-N-acetylglucosamine 1-carboxyvinyltransferase from Rhizobium johnstonii (strain DSM 114642 / LMG 32736 / 3841) (Rhizobium leguminosarum bv. viciae).